Here is a 39-residue protein sequence, read N- to C-terminus: Photosystem II reaction center protein L (39 aa).

Residues 18 to 38 (SLYWGLLLIFVLAVLFSNYFF) traverse the membrane as a helical segment.

The protein belongs to the PsbL family. In terms of assembly, PSII is composed of 1 copy each of membrane proteins PsbA, PsbB, PsbC, PsbD, PsbE, PsbF, PsbH, PsbI, PsbJ, PsbK, PsbL, PsbM, PsbT, PsbX, PsbY, PsbZ, Psb30/Ycf12, at least 3 peripheral proteins of the oxygen-evolving complex and a large number of cofactors. It forms dimeric complexes.

It is found in the plastid thylakoid membrane. Functionally, one of the components of the core complex of photosystem II (PSII). PSII is a light-driven water:plastoquinone oxidoreductase that uses light energy to abstract electrons from H(2)O, generating O(2) and a proton gradient subsequently used for ATP formation. It consists of a core antenna complex that captures photons, and an electron transfer chain that converts photonic excitation into a charge separation. This subunit is found at the monomer-monomer interface and is required for correct PSII assembly and/or dimerization. The polypeptide is Photosystem II reaction center protein L (Cuscuta gronovii (Common dodder)).